The following is a 162-amino-acid chain: Large ribosomal subunit protein uL10 (162 aa).

It belongs to the universal ribosomal protein uL10 family. In terms of assembly, part of the ribosomal stalk of the 50S ribosomal subunit. The N-terminus interacts with L11 and the large rRNA to form the base of the stalk. The C-terminus forms an elongated spine to which L12 dimers bind in a sequential fashion forming a multimeric L10(L12)X complex.

In terms of biological role, forms part of the ribosomal stalk, playing a central role in the interaction of the ribosome with GTP-bound translation factors. In Vibrio vulnificus (strain CMCP6), this protein is Large ribosomal subunit protein uL10.